Reading from the N-terminus, the 548-residue chain is Chaperonin GroEL (548 aa).

Residues 30–33 (TLGP), Lys-51, 87–91 (DGTTT), Gly-415, and Asp-495 contribute to the ATP site.

Belongs to the chaperonin (HSP60) family. Forms a cylinder of 14 subunits composed of two heptameric rings stacked back-to-back. Interacts with the co-chaperonin GroES.

The protein resides in the cytoplasm. It carries out the reaction ATP + H2O + a folded polypeptide = ADP + phosphate + an unfolded polypeptide.. In terms of biological role, together with its co-chaperonin GroES, plays an essential role in assisting protein folding. The GroEL-GroES system forms a nano-cage that allows encapsulation of the non-native substrate proteins and provides a physical environment optimized to promote and accelerate protein folding. The sequence is that of Chaperonin GroEL from Pseudoalteromonas atlantica (strain T6c / ATCC BAA-1087).